We begin with the raw amino-acid sequence, 397 residues long: Arginine biosynthesis bifunctional protein ArgJ (397 aa).

Substrate-binding residues include T147, K173, T184, E270, N392, and T397. The Nucleophile role is filled by T184.

Belongs to the ArgJ family. Heterotetramer of two alpha and two beta chains.

The protein resides in the cytoplasm. It catalyses the reaction N(2)-acetyl-L-ornithine + L-glutamate = N-acetyl-L-glutamate + L-ornithine. It carries out the reaction L-glutamate + acetyl-CoA = N-acetyl-L-glutamate + CoA + H(+). It functions in the pathway amino-acid biosynthesis; L-arginine biosynthesis; L-ornithine and N-acetyl-L-glutamate from L-glutamate and N(2)-acetyl-L-ornithine (cyclic): step 1/1. It participates in amino-acid biosynthesis; L-arginine biosynthesis; N(2)-acetyl-L-ornithine from L-glutamate: step 1/4. In terms of biological role, catalyzes two activities which are involved in the cyclic version of arginine biosynthesis: the synthesis of N-acetylglutamate from glutamate and acetyl-CoA as the acetyl donor, and of ornithine by transacetylation between N(2)-acetylornithine and glutamate. The chain is Arginine biosynthesis bifunctional protein ArgJ from Streptococcus thermophilus (strain ATCC BAA-250 / LMG 18311).